Here is a 576-residue protein sequence, read N- to C-terminus: MAGUK p55 subfamily member 7 (576 aa).

L27 domains are found at residues 10 to 63 (SDTG…YEKE) and 65 to 122 (PMPV…YDPV). A PDZ domain is found at 139 to 220 (IIRLVKNREP…AITFKIIPSI (82 aa)). Residues 228–298 (DGKMFVKALF…PSKQFQERRF (71 aa)) enclose the SH3 domain. Residues 368 to 560 (YRLVILVGPV…AYNELRSTLE (193 aa)) form the Guanylate kinase-like domain.

The protein belongs to the MAGUK family.

It localises to the membrane. The protein localises to the cell junction. Its subcellular location is the tight junction. The protein resides in the adherens junction. In terms of biological role, acts as an important adapter that promotes epithelial cell polarity and tight junction formation. Involved in the assembly of protein complexes at sites of cell-cell contact. This chain is MAGUK p55 subfamily member 7 (mpp7), found in Xenopus tropicalis (Western clawed frog).